The chain runs to 704 residues: DNA ligase (704 aa).

NAD(+) is bound by residues 43–47 (DADYD), 92–93 (SL), and glutamate 124. Lysine 126 serves as the catalytic N6-AMP-lysine intermediate. Arginine 147, glutamate 182, lysine 298, and lysine 322 together coordinate NAD(+). Zn(2+) is bound by residues cysteine 427, cysteine 430, cysteine 445, and cysteine 451. The BRCT domain occupies 625 to 704 (PVASPVAGKI…DGWLRLIGDA (80 aa)).

It belongs to the NAD-dependent DNA ligase family. LigA subfamily. Mg(2+) serves as cofactor. Requires Mn(2+) as cofactor.

It catalyses the reaction NAD(+) + (deoxyribonucleotide)n-3'-hydroxyl + 5'-phospho-(deoxyribonucleotide)m = (deoxyribonucleotide)n+m + AMP + beta-nicotinamide D-nucleotide.. Functionally, DNA ligase that catalyzes the formation of phosphodiester linkages between 5'-phosphoryl and 3'-hydroxyl groups in double-stranded DNA using NAD as a coenzyme and as the energy source for the reaction. It is essential for DNA replication and repair of damaged DNA. This is DNA ligase from Cereibacter sphaeroides (strain ATCC 17023 / DSM 158 / JCM 6121 / CCUG 31486 / LMG 2827 / NBRC 12203 / NCIMB 8253 / ATH 2.4.1.) (Rhodobacter sphaeroides).